We begin with the raw amino-acid sequence, 218 residues long: uncharacterized protein (218 aa).

Polar residues-rich tracts occupy residues 1–21 (MSSQQQESEASGYNTSASSEF) and 68–102 (LNTSNDSNLVRNTARSPDSSMNGRPQTRRSTSSDI). Disordered stretches follow at residues 1 to 39 (MSSQQQESEASGYNTSASSEFGSLEDSHQFVSPVTRHAS), 63 to 116 (EKRL…STSG), and 170 to 205 (GAKRKMATPSQSLKRQEKQSPLESRHGGLRSRGTPQ). A compositionally biased stretch (basic and acidic residues) spans 183–195 (KRQEKQSPLESRH).

This is an uncharacterized protein from Caenorhabditis elegans.